The primary structure comprises 467 residues: GTPase Der (467 aa).

EngA-type G domains follow at residues 3-167 and 179-352; these read PTLV…PYEE and PVIA…AAAR. Residues 9-16, 56-60, 119-122, 185-192, 232-236, and 297-300 contribute to the GTP site; these read GRPNVGKS, DTGGF, NKTE, DTAGL, and NKWD. Residues 353–437 form the KH-like domain; it reads AHIPTPKLTR…PLRVEFRTGH (85 aa). The disordered stretch occupies residues 434–467; sequence RTGHNPYAGKKTPLTEEEARRAHSRRRRNRKKYG. Over residues 455–467 the composition is skewed to basic residues; sequence AHSRRRRNRKKYG.

The protein belongs to the TRAFAC class TrmE-Era-EngA-EngB-Septin-like GTPase superfamily. EngA (Der) GTPase family. In terms of assembly, associates with the 50S ribosomal subunit.

In terms of biological role, GTPase that plays an essential role in the late steps of ribosome biogenesis. This Nitrosomonas europaea (strain ATCC 19718 / CIP 103999 / KCTC 2705 / NBRC 14298) protein is GTPase Der.